A 514-amino-acid chain; its full sequence is MQQLNPSEISEIIKGRIDKLDVTSQARNEGTVVSVSDGIVRIHGLADVMYGEMIEFPGGVYGMALNLEQDSVGAVVLGAYTTLAEGMSAKCTGRILEVPVGKELLGRVVDALGNPVDGKGPLNNTETDAVEKVAPGVIWRKSVDQPVQTGYKAVDAMIPVGRGQRELIIGDRQIGKTALAIDAIINQKNSGIFCVYVAIGQKQSTIANVVRKLEENGALANTIVVAASASESAALQFLAPYSGCTMGEFFRDRGEDALIVYDDLSKQAVAYRQISLLLRRPPGREAYPGDVFYLHSRLLERASRVSEEYVEKFTNGAVTGKTGSLTALPIIETQAGDVSAFVPTNVISITDGQIFLESAMFNSGIRPAVNAGVSVSRVGGAAQTKIIKKLSGGIRTALAQYRELAAFAQFASDLDEATRKQLEHGQRVTELMKQKQYAPMSIADMALSLYAAERGFLTDVEIAKIGSFEQALIAYFNRDHADLMAKINVKGDFNDEIDSGMKAGIEKFKATQTW.

ATP is bound at residue 170 to 177; sequence GDRQIGKT.

This sequence belongs to the ATPase alpha/beta chains family. In terms of assembly, F-type ATPases have 2 components, CF(1) - the catalytic core - and CF(0) - the membrane proton channel. CF(1) has five subunits: alpha(3), beta(3), gamma(1), delta(1), epsilon(1). CF(0) has three main subunits: a(1), b(2) and c(9-12). The alpha and beta chains form an alternating ring which encloses part of the gamma chain. CF(1) is attached to CF(0) by a central stalk formed by the gamma and epsilon chains, while a peripheral stalk is formed by the delta and b chains.

The protein localises to the cell inner membrane. The enzyme catalyses ATP + H2O + 4 H(+)(in) = ADP + phosphate + 5 H(+)(out). In terms of biological role, produces ATP from ADP in the presence of a proton gradient across the membrane. The alpha chain is a regulatory subunit. This chain is ATP synthase subunit alpha, found in Pseudomonas savastanoi pv. phaseolicola (strain 1448A / Race 6) (Pseudomonas syringae pv. phaseolicola (strain 1448A / Race 6)).